Consider the following 522-residue polypeptide: Transactivator/viroplasmin protein (522 aa).

Positions 111 to 126 (QGIQIPQKSEPNSSVA) are enriched in polar residues. Disordered regions lie at residues 111–133 (QGIQIPQKSEPNSSVAPNRAESG) and 491–522 (SADSKVADKEGPPLTTNVEKEDVSTTSSKASG).

This sequence belongs to the caulimoviridae viroplasmin family.

It localises to the host cytoplasm. Its function is as follows. Enhances the ribosomal termination-reinitiation event leading to the translation of major open reading frames on the polycistronic viral RNAs. The chain is Transactivator/viroplasmin protein from Arabidopsis thaliana (Mouse-ear cress).